Reading from the N-terminus, the 124-residue chain is MSQSLFNLKSLSRSINNTIRMRRYIVITKASQRAYTIGSSQEKPSWASDPDTGYFRPETAAKELDPYIAKTSQVQGKMMRGEELWWMPDPQTGYYRPDNFARELDAVELRSLHFNKNQKTYVVS.

The transit peptide at 1–35 directs the protein to the mitochondrion; it reads MSQSLFNLKSLSRSINNTIRMRRYIVITKASQRAY.

It belongs to the LEA type 3 family.

Its subcellular location is the mitochondrion. The polypeptide is Late embryogenesis abundant protein 37 (Arabidopsis thaliana (Mouse-ear cress)).